Consider the following 145-residue polypeptide: Globin (145 aa).

Ser2 is modified (N-acetylserine). Positions 2 to 145 (SLSAAEADLV…IVAALKAAGK (144 aa)) constitute a Globin domain. Residue His96 coordinates heme b.

The protein belongs to the globin family. Monomer.

This Aplysia kurodai (Kuroda's sea hare) protein is Globin.